The sequence spans 644 residues: Chaperone protein DnaK (644 aa).

The residue at position 199 (Thr-199) is a Phosphothreonine; by autocatalysis. The interval 602–644 (IYAKKSSEGQTAQGQTQSQESTKPAEEGVVDAEFEEVKEEDKK) is disordered. The segment covering 609–623 (EGQTAQGQTQSQEST) has biased composition (polar residues). A compositionally biased stretch (acidic residues) spans 629-644 (GVVDAEFEEVKEEDKK).

This sequence belongs to the heat shock protein 70 family.

Its function is as follows. Acts as a chaperone. The protein is Chaperone protein DnaK of Legionella pneumophila (strain Lens).